Here is a 103-residue protein sequence, read N- to C-terminus: Large ribosomal subunit protein uL22c (103 aa).

Belongs to the universal ribosomal protein uL22 family. In terms of assembly, part of the 50S ribosomal subunit.

It is found in the plastid. The protein localises to the chloroplast. Its function is as follows. This protein binds specifically to 23S rRNA. Functionally, the globular domain of the protein is located near the polypeptide exit tunnel on the outside of the subunit, while an extended beta-hairpin is found that lines the wall of the exit tunnel in the center of the 70S ribosome. The sequence is that of Large ribosomal subunit protein uL22c (rpl22) from Cyanidium caldarium (Red alga).